The following is a 639-amino-acid chain: Sodium-dependent phosphate transport protein 2A (639 aa).

The Cytoplasmic segment spans residues 1–103 (MISYGENLGG…LRRAGVTLLK (103 aa)). Phosphoserine occurs at positions 14 and 34. A helical transmembrane segment spans residues 104 to 125 (VPLMLSFLYLFVCSLDVLSSAF). At 126–145 (QLAGGKVAGDIFKDNAILSN) the chain is on the extracellular side. Residues 146–163 (PVAGLVVGILVTVLVQSS) traverse the membrane as a helical segment. Residues 164 to 165 (ST) lie on the Cytoplasmic side of the membrane. The chain crosses the membrane as a helical span at residues 166–185 (STSIVVSMVSSGLLEVSSAI). Residues 186 to 347 (PIIMGSNIGT…HIFVDTGLPD (162 aa)) lie on the Extracellular side of the membrane. Intrachain disulfides connect Cys-225–Cys-522 and Cys-306–Cys-336. 3 N-linked (GlcNAc...) asparagine glycosylation sites follow: Asn-298, Asn-323, and Asn-330. A helical membrane pass occupies residues 348-370 (LAVGLILLAGSLALLCTCLILLV). Residues 371-412 (KMLNSLLKGQVAKVIQKVINTDFPTPFTWATGYFAMVVGASM) are Cytoplasmic-facing. A helical transmembrane segment spans residues 413-436 (TFVVQSSSVFTSAITPLIGLGVIS). At 437 to 466 (IERAYPLTLGSNIGTTTTAILAALASPREK) the chain is on the extracellular side. Residues 467-487 (LSSAFQIALCHFFFNISGILL) traverse the membrane as a helical segment. The Cytoplasmic segment spans residues 488–513 (WYPVPCTRLPIRMAKALGKRTAKYRW). Thr-508 is modified (phosphothreonine; by PKC). A helical membrane pass occupies residues 514–534 (FAVLYLLLCFLLLPSMVFGLS). Topologically, residues 535-539 (MAGWR) are extracellular. The chain crosses the membrane as a helical span at residues 540 to 561 (AMVGVGAPFGALLAFVVLVSAL). The Cytoplasmic segment spans residues 562–639 (QHRSPGCLPK…MPHHHDATRL (78 aa)). Ser-607 bears the Phosphoserine mark. Phosphothreonine is present on Thr-623. At Ser-625 the chain carries Phosphoserine.

Belongs to the SLC34A transporter family. Interacts via its C-terminal region with NHERF4. Interacts with NHERF1. Interacts with TMEM174; regulates SLC34A1 internalization by PTH and FGF23.

The protein localises to the apical cell membrane. It is found in the cell membrane. It carries out the reaction 3 Na(+)(out) + phosphate(out) = 3 Na(+)(in) + phosphate(in). Its function is as follows. Involved in actively transporting phosphate into cells via Na(+) cotransport in the renal brush border membrane. The cotransport has a Na(+):Pi stoichiometry of 3:1 and is electrogenic. In Ovis aries (Sheep), this protein is Sodium-dependent phosphate transport protein 2A.